Here is a 363-residue protein sequence, read N- to C-terminus: Dihydroorotate dehydrogenase (quinone) (363 aa).

FMN contacts are provided by residues Ala67–Lys71 and Thr91. Lys71 lines the substrate pocket. A substrate-binding site is contributed by Asn116 to Phe120. The FMN site is built by Asn145 and Asn178. Substrate is bound at residue Asn178. Ser181 serves as the catalytic Nucleophile. Asn183 contributes to the substrate binding site. FMN-binding residues include Lys224 and Thr254. Asn255–Thr256 contributes to the substrate binding site. Residues Gly275, Gly304, and Tyr325 to Ser326 contribute to the FMN site.

Belongs to the dihydroorotate dehydrogenase family. Type 2 subfamily. As to quaternary structure, monomer. FMN is required as a cofactor.

The protein resides in the cell membrane. It catalyses the reaction (S)-dihydroorotate + a quinone = orotate + a quinol. Its pathway is pyrimidine metabolism; UMP biosynthesis via de novo pathway; orotate from (S)-dihydroorotate (quinone route): step 1/1. Catalyzes the conversion of dihydroorotate to orotate with quinone as electron acceptor. The protein is Dihydroorotate dehydrogenase (quinone) of Acidithiobacillus ferrooxidans (strain ATCC 23270 / DSM 14882 / CIP 104768 / NCIMB 8455) (Ferrobacillus ferrooxidans (strain ATCC 23270)).